The following is a 571-amino-acid chain: DExH-box ATP-dependent RNA helicase DExH16, mitochondrial (571 aa).

The N-terminal 56 residues, 1–56, are a transit peptide targeting the mitochondrion; it reads MAYSVVRLRKVSALGISRVLQADKGSLWRFHFEPEFGDLLRLGVLTRNYRKNSGSP. Positions 83 to 212 constitute a Helicase ATP-binding domain; it reads IARKKKRKVI…HLCGDPAVVP (130 aa). 96–103 is a binding site for ATP; that stretch reads GPTNSGKT. Residues 176-179 carry the DEIH box; degenerate motif; sequence DEIQ. Positions 213–399 constitute a Helicase C-terminal domain; it reads LVEDILKVTG…GLFPTFDLLS (187 aa).

This sequence belongs to the DExH box helicase family. Homodimer; in free form. Component of the mitochondrial degradosome (mtEXO) complex which is a heteropentamer containing 2 copies of SUPV3L1 and 3 copies of PNPT1. The cofactor is Mg(2+). Mn(2+) is required as a cofactor. In terms of tissue distribution, weakly expressed.

It localises to the nucleus. The protein localises to the mitochondrion matrix. It is found in the mitochondrion nucleoid. The enzyme catalyses ATP + H2O = ADP + phosphate + H(+). Activated by the presence of mitochondrial RNA. Functionally, major helicase player in mitochondrial RNA metabolism. Component of the mitochondrial degradosome (mtEXO) complex, that degrades 3' overhang double-stranded RNA with a 3'-to-5' directionality in an ATP-dependent manner. ATPase and ATP-dependent multisubstrate helicase, able to unwind double-stranded (ds) DNA and RNA, and RNA/DNA heteroduplexes in the 5'-to-3' direction. Plays a role in the RNA surveillance system in mitochondria; regulates the stability of mature mRNAs, the removal of aberrantly formed mRNAs and the rapid degradation of non coding processing intermediates. Required during pollen development. In Arabidopsis thaliana (Mouse-ear cress), this protein is DExH-box ATP-dependent RNA helicase DExH16, mitochondrial.